The primary structure comprises 138 residues: Large ribosomal subunit protein uL16c (138 aa).

It belongs to the universal ribosomal protein uL16 family. As to quaternary structure, part of the 50S ribosomal subunit.

The protein localises to the plastid. Its subcellular location is the chloroplast. This Physcomitrium patens (Spreading-leaved earth moss) protein is Large ribosomal subunit protein uL16c.